The following is a 243-amino-acid chain: Orotidine 5'-phosphate decarboxylase (243 aa).

Substrate contacts are provided by residues Asp-19, Lys-41, 69-78 (DLKFFDIPAT), Thr-124, Arg-185, Gln-194, Gly-214, and Arg-215. Residue Lys-71 is the Proton donor of the active site.

The protein belongs to the OMP decarboxylase family. Type 1 subfamily. As to quaternary structure, homodimer.

It catalyses the reaction orotidine 5'-phosphate + H(+) = UMP + CO2. It functions in the pathway pyrimidine metabolism; UMP biosynthesis via de novo pathway; UMP from orotate: step 2/2. Functionally, catalyzes the decarboxylation of orotidine 5'-monophosphate (OMP) to uridine 5'-monophosphate (UMP). This Xanthomonas campestris pv. campestris (strain B100) protein is Orotidine 5'-phosphate decarboxylase.